A 278-amino-acid chain; its full sequence is MPHRARDTVLEPPELRARREFPVAWAGAGPQHPGMIRKAPKSDAAPPAKGVIAVAPPSFRRERALLKRGIWPVAGCDEAGRGPLAGPVVAAAVVLDPKRIPKGLDDSKKLTAEKREALFEEICATASFAVAYASPARIERDNILRASLWALARAVQALPEPPKHVFVDGRDKIITPCDCDAVIGGDALVLSIAAASIIAKVARDRLMCRLAEDCPGYGFDHHKGYGVPEHLAALDRLGPTKHHRKLFAPVAAAWDKHAPGERETAAAPPDLFGLSASA.

The RNase H type-2 domain maps to 71–259 (WPVAGCDEAG…VAAAWDKHAP (189 aa)). 3 residues coordinate a divalent metal cation: aspartate 77, glutamate 78, and aspartate 168.

Belongs to the RNase HII family. Mn(2+) is required as a cofactor. Mg(2+) serves as cofactor.

Its subcellular location is the cytoplasm. It carries out the reaction Endonucleolytic cleavage to 5'-phosphomonoester.. Its function is as follows. Endonuclease that specifically degrades the RNA of RNA-DNA hybrids. The chain is Ribonuclease HII from Rhodopseudomonas palustris (strain BisA53).